The sequence spans 283 residues: Pantothenate synthetase (283 aa).

30-37 (MGNLHAGH) lines the ATP pocket. Histidine 37 serves as the catalytic Proton donor. Glutamine 61 provides a ligand contact to (R)-pantoate. Glutamine 61 contacts beta-alanine. 149 to 152 (GEKD) is an ATP binding site. Glutamine 155 lines the (R)-pantoate pocket. ATP is bound by residues leucine 178 and 186–189 (MSSR).

Belongs to the pantothenate synthetase family. In terms of assembly, homodimer.

Its subcellular location is the cytoplasm. It carries out the reaction (R)-pantoate + beta-alanine + ATP = (R)-pantothenate + AMP + diphosphate + H(+). Its pathway is cofactor biosynthesis; (R)-pantothenate biosynthesis; (R)-pantothenate from (R)-pantoate and beta-alanine: step 1/1. Its function is as follows. Catalyzes the condensation of pantoate with beta-alanine in an ATP-dependent reaction via a pantoyl-adenylate intermediate. The sequence is that of Pantothenate synthetase from Hahella chejuensis (strain KCTC 2396).